The sequence spans 450 residues: UDP-N-acetylmuramoylalanine--D-glutamate ligase (450 aa).

Residue 119-125 (GSNGKTT) coordinates ATP.

This sequence belongs to the MurCDEF family.

Its subcellular location is the cytoplasm. The enzyme catalyses UDP-N-acetyl-alpha-D-muramoyl-L-alanine + D-glutamate + ATP = UDP-N-acetyl-alpha-D-muramoyl-L-alanyl-D-glutamate + ADP + phosphate + H(+). It participates in cell wall biogenesis; peptidoglycan biosynthesis. In terms of biological role, cell wall formation. Catalyzes the addition of glutamate to the nucleotide precursor UDP-N-acetylmuramoyl-L-alanine (UMA). In Streptococcus pneumoniae serotype 4 (strain ATCC BAA-334 / TIGR4), this protein is UDP-N-acetylmuramoylalanine--D-glutamate ligase.